The following is a 33-amino-acid chain: DNA-directed RNA polymerase subunit beta' (33 aa).

Belongs to the RNA polymerase beta' chain family. RpoC1 subfamily. In terms of assembly, in plastids the minimal PEP RNA polymerase catalytic core is composed of four subunits: alpha, beta, beta', and beta''. When a (nuclear-encoded) sigma factor is associated with the core the holoenzyme is formed, which can initiate transcription.

It localises to the plastid. The protein localises to the chloroplast. The enzyme catalyses RNA(n) + a ribonucleoside 5'-triphosphate = RNA(n+1) + diphosphate. Functionally, DNA-dependent RNA polymerase catalyzes the transcription of DNA into RNA using the four ribonucleoside triphosphates as substrates. This is DNA-directed RNA polymerase subunit beta' (rpoC1) from Heterosigma akashiwo (Chromophytic alga).